The sequence spans 266 residues: Gasdermin bGSDM (266 aa).

The S-palmitoyl cysteine moiety is linked to residue Cys-6. The next 4 beta stranded transmembrane spans lie at 70-86 (ISHS…AGNF), 99-117 (APKL…FSFS), 163-180 (AIDM…DVQA), and 189-205 (LGGK…TISF). Positions 245-266 (GAAEPYLLRRGQVLIVEDMQAT) are C-terminal region.

It belongs to the bacterial gasdermin family. In terms of assembly, monomer. Forms large, homooligomeric ring-shaped pores when inserted in membranes. Cleavage by the adjacently encoded protease (probably ISF6_0256) predicted to occur between Glu-244 and Gly-245 relieves autoinhibition, releasing the N-terminus which initiates loss of cell integrity. Post-translationally, palmitoylation helps stabilize the inactive state; may self palmitoylate. Palmitoylation plays a significant role in pore formation.

It is found in the cytoplasm. The protein localises to the cell inner membrane. The full-length protein before cleavage is inactive: intramolecular interactions between the N-terminal domain and the C-terminal region as well as the lipid modification, mediate autoinhibition. The pyroptosis-like-inducing activity is carried by the released N-terminal domain (Gasdermin bGSDM, N-terminus). Precursor of a pore-forming protein involved in defense against bacteriophages. Cleavage of this precursor by its dedicated, neighboring protease (probably ISF6_0256) releases the active moiety (gasdermin bGSDM, N-terminus) which inserts into membranes, forming pores and triggering cell death. Functionally, pore-forming protein that causes membrane permeabilization via a pyroptosis-like activity. Makes ring-like pores with an interior pore diameter of 300-400 Angstroms, when integrated in liposomes. The chain is Gasdermin bGSDM from Piscinibacter sakaiensis (Ideonella sakaiensis).